A 376-amino-acid chain; its full sequence is PqqA peptide cyclase (376 aa).

Residues 4–219 enclose the Radical SAM core domain; the sequence is VPPPLSVLLE…VETARRSLGD (216 aa). The [4Fe-4S] cluster site is built by Cys18, Cys22, and Cys25.

Belongs to the radical SAM superfamily. PqqE family. As to quaternary structure, interacts with PqqD. The interaction is necessary for activity of PqqE. [4Fe-4S] cluster serves as cofactor.

The enzyme catalyses [PQQ precursor protein] + S-adenosyl-L-methionine = E-Y cross-linked-[PQQ precursor protein] + 5'-deoxyadenosine + L-methionine + H(+). It participates in cofactor biosynthesis; pyrroloquinoline quinone biosynthesis. In terms of biological role, catalyzes the cross-linking of a glutamate residue and a tyrosine residue in the PqqA protein as part of the biosynthesis of pyrroloquinoline quinone (PQQ). The sequence is that of PqqA peptide cyclase from Xanthomonas campestris pv. campestris (strain B100).